The sequence spans 296 residues: Diguanylate cyclase DgcS (296 aa).

Residues Gly165–Thr293 form the GGDEF domain. The Mg(2+) site is built by Asp173, Leu174, and Asp216. The active site involves Asp216.

Mg(2+) is required as a cofactor.

The catalysed reaction is 2 GTP = 3',3'-c-di-GMP + 2 diphosphate. Functionally, catalyzes the synthesis of cyclic-di-GMP (c-di-GMP) via the condensation of 2 GTP molecules. May be involved in the regulation of formation of solid surface-associated biofilms and pellicles according to environmental conditions. The chain is Diguanylate cyclase DgcS from Shewanella oneidensis (strain ATCC 700550 / JCM 31522 / CIP 106686 / LMG 19005 / NCIMB 14063 / MR-1).